Here is a 106-residue protein sequence, read N- to C-terminus: MSDSIISFAAFILADAGLEITSDNLLTITKAAGANVDNVWADVYAKALEGKDLKEILSGFHNAGPVAGAGAASGAAAAGGDAAAEEEKEEEAAEESDDDMGFGLFD.

Ser2 is modified (N-acetylserine). A compositionally biased stretch (low complexity) spans 69 to 82 (AGAASGAAAAGGDA). The disordered stretch occupies residues 69–106 (AGAASGAAAAGGDAAAEEEKEEEAAEESDDDMGFGLFD). Positions 83–100 (AAEEEKEEEAAEESDDDM) are enriched in acidic residues. Ser96 carries the post-translational modification Phosphoserine.

It belongs to the eukaryotic ribosomal protein P1/P2 family. In terms of assembly, component of the large ribosomal subunit (LSU). Mature yeast ribosomes consist of a small (40S) and a large (60S) subunit. The 40S small subunit contains 1 molecule of ribosomal RNA (18S rRNA) and 33 different proteins (encoded by 57 genes). The large 60S subunit contains 3 rRNA molecules (25S, 5.8S and 5S rRNA) and 46 different proteins (encoded by 81 genes). The 5 acidic ribosomal P-proteins form the stalk structure of the 60S subunit. They are organized as a pentameric complex in which uL10/P0 interacts with 2 heterodimers, P1A-P2B and P1B-P2A.

It is found in the cytoplasm. Its function is as follows. Component of the ribosome, a large ribonucleoprotein complex responsible for the synthesis of proteins in the cell. The small ribosomal subunit (SSU) binds messenger RNAs (mRNAs) and translates the encoded message by selecting cognate aminoacyl-transfer RNA (tRNA) molecules. The large subunit (LSU) contains the ribosomal catalytic site termed the peptidyl transferase center (PTC), which catalyzes the formation of peptide bonds, thereby polymerizing the amino acids delivered by tRNAs into a polypeptide chain. The nascent polypeptides leave the ribosome through a tunnel in the LSU and interact with protein factors that function in enzymatic processing, targeting, and the membrane insertion of nascent chains at the exit of the ribosomal tunnel. The sequence is that of Large ribosomal subunit protein P1B from Saccharomyces cerevisiae (strain ATCC 204508 / S288c) (Baker's yeast).